Reading from the N-terminus, the 476-residue chain is PTS system N-acetylmuramic acid-specific EIIBC component (476 aa).

In terms of domain architecture, PTS EIIB type-1 spans 1–89 (MATIDNAMIH…KASLGDNMSS (89 aa)). Catalysis depends on Cys28, which acts as the Phosphocysteine intermediate; for EIIB activity. One can recognise a PTS EIIC type-1 domain in the interval 116 to 476 (AKFATIFTPL…FFATKDVDLS (361 aa)). 10 helical membrane-spanning segments follow: residues 118 to 138 (FATI…LLGL), 160 to 180 (LIAY…ILIG), 186 to 206 (AFGG…LGYN), 220 to 240 (FFGL…AAIV), 265 to 285 (TLLI…VYLF), 304 to 324 (VLAG…FVPV), 337 to 357 (LFPV…ALYF), 371 to 391 (GAII…VTLP), 396 to 416 (FITA…IAYL), and 443 to 463 (VLPA…TGFI).

It is found in the cell inner membrane. The catalysed reaction is N-acetyl-beta-D-muramate(out) + N(pros)-phospho-L-histidyl-[protein] = N-acetyl-beta-D-muramate 6-phosphate(in) + L-histidyl-[protein]. Its function is as follows. The phosphoenolpyruvate-dependent sugar phosphotransferase system (sugar PTS), a major carbohydrate active transport system, catalyzes the phosphorylation of incoming sugar substrates concomitantly with their translocation across the cell membrane. This system is involved in N-acetylmuramic acid (MurNAc) transport, yielding cytoplasmic MurNAc-6-P. Is also able to take up anhydro-N-acetylmuramic acid (anhMurNAc), but cannot phosphorylate the carbon 6, probably because of the 1,6-anhydro ring. The polypeptide is PTS system N-acetylmuramic acid-specific EIIBC component (murP) (Pasteurella multocida (strain Pm70)).